The primary structure comprises 98 residues: Cystatin-B (98 aa).

M1 is subject to N-acetylmethionine. Positions 46 to 50 match the Secondary area of contact motif; the sequence is QVVAG.

Belongs to the cystatin family. As to quaternary structure, able to form dimers stabilized by noncovalent forces.

It is found in the cytoplasm. The protein resides in the nucleus. This is an intracellular thiol proteinase inhibitor. Tightly binding reversible inhibitor of cathepsins L, H and B. The polypeptide is Cystatin-B (CSTB) (Pongo pygmaeus (Bornean orangutan)).